Reading from the N-terminus, the 331-residue chain is L-lactate dehydrogenase A chain (331 aa).

NAD(+) contacts are provided by residues 29–57 (GMVG…MEDK) and arginine 98. Substrate contacts are provided by arginine 105, asparagine 137, and arginine 168. Asparagine 137 contacts NAD(+). Residue histidine 192 is the Proton acceptor of the active site. Position 247 (threonine 247) interacts with substrate.

It belongs to the LDH/MDH superfamily. LDH family. In terms of assembly, homotetramer.

Its subcellular location is the cytoplasm. The enzyme catalyses (S)-lactate + NAD(+) = pyruvate + NADH + H(+). It functions in the pathway fermentation; pyruvate fermentation to lactate; (S)-lactate from pyruvate: step 1/1. In terms of biological role, interconverts simultaneously and stereospecifically pyruvate and lactate with concomitant interconversion of NADH and NAD(+). The protein is L-lactate dehydrogenase A chain (ldha) of Patagonotothen tessellata (Black southern cod).